The chain runs to 217 residues: LexA repressor (217 aa).

Positions Phe26–Lys46 form a DNA-binding region, H-T-H motif. Active-site for autocatalytic cleavage activity residues include Ser138 and Lys176.

Belongs to the peptidase S24 family. Homodimer.

The enzyme catalyses Hydrolysis of Ala-|-Gly bond in repressor LexA.. Represses a number of genes involved in the response to DNA damage (SOS response), including recA and lexA. In the presence of single-stranded DNA, RecA interacts with LexA causing an autocatalytic cleavage which disrupts the DNA-binding part of LexA, leading to derepression of the SOS regulon and eventually DNA repair. The chain is LexA repressor from Zymomonas mobilis subsp. mobilis (strain ATCC 31821 / ZM4 / CP4).